A 257-amino-acid chain; its full sequence is UPF0246 protein Shew185_1115 (257 aa).

The protein belongs to the UPF0246 family.

The chain is UPF0246 protein Shew185_1115 from Shewanella baltica (strain OS185).